Reading from the N-terminus, the 311-residue chain is 4-hydroxyproline 2-epimerase (311 aa).

Residue Cys-89 is the Proton acceptor of the active site. Substrate is bound by residues 90 to 91 (GH), His-209, and Asp-233. Cys-237 (proton donor) is an active-site residue. Residue 238 to 239 (GT) coordinates substrate.

This sequence belongs to the proline racemase family.

It catalyses the reaction trans-4-hydroxy-L-proline = cis-4-hydroxy-D-proline. Functionally, catalyzes the epimerization of trans-4-hydroxy-L-proline (t4LHyp) to cis-4-hydroxy-D-proline (c4DHyp). Is likely involved in a degradation pathway that converts t4LHyp to alpha-ketoglutarate. Displays no proline racemase activity. The polypeptide is 4-hydroxyproline 2-epimerase (Burkholderia ambifaria (strain ATCC BAA-244 / DSM 16087 / CCUG 44356 / LMG 19182 / AMMD) (Burkholderia cepacia (strain AMMD))).